Reading from the N-terminus, the 503-residue chain is MALWRSSDNLVYLPPTPVSKVISTDDYVTRTNIYYYAGSSRLLTVGHPHYSIPKSSGNKVDVPKVSAFQYRVFRVRLPDPNKFGLPDARIYNPEAERLVWACTGVEVGRGQPLGVGLSGHPLYNKLNDTENSNIAHAENGQDSRDNIAVDYKQTQLCILGCTPPMGEHWGKGTVCARTSSAAGDCPPLELMTTHIEDGDMVDTGYGAMDFAALQVNKSDVPLDICQSTCKYPDYLGMAADPYGDSMFFFLRREQLFARHFFNRAGVVGDKIPDSLYLKGNNGRETPGSAIYSPTPSGSMVTSEAQIFNKPYWLQQAQGHNNGICWANQVFLTVVDTTRSTNMSLCATTESQPLTTYDATKIKEYLRHGEEYDLQFIFQLCKVTLTPEIMAYLHTMNSALLEDWNFGLTLPPSTSLEDTYRFVTSSAITCQKDLAPTEKQDPYAKLNFWDVDLKDRFTLDLSQFPLGRKFLLQIGARRRSVVPSRKRRTTTTAPTPAKRKRSKK.

The disordered stretch occupies residues 480 to 503 (VVPSRKRRTTTTAPTPAKRKRSKK).

This sequence belongs to the papillomaviridae L1 protein family. As to quaternary structure, self-assembles into homopentamers. The capsid has an icosahedral symmetry and consists of 72 capsomers, with each capsomer being a pentamer of L1. Interacts with the minor capsid protein L2; this interaction is necessary for viral genome encapsidation. Interacts with protein E2; this interaction enhances E2-dependent replication and transcription activation.

The protein localises to the virion. The protein resides in the host nucleus. Its function is as follows. Forms an icosahedral capsid with a T=7 symmetry and a 50 nm diameter. The capsid is composed of 72 pentamers linked to each other by disulfide bonds and associated with L2 proteins. Binds to heparan sulfate proteoglycans on cell surface of basal layer keratinocytes to provide initial virion attachment. This binding mediates a conformational change in the virus capsid that facilitates efficient infection. The virion enters the host cell via endocytosis. During virus trafficking, L1 protein dissociates from the viral DNA and the genomic DNA is released to the host nucleus. The virion assembly takes place within the cell nucleus. Encapsulates the genomic DNA together with protein L2. In Homo sapiens (Human), this protein is Major capsid protein L1.